A 286-amino-acid chain; its full sequence is Aminoglycoside N(3)-acetyltransferase III (286 aa).

Belongs to the antibiotic N-acetyltransferase family.

The enzyme catalyses a 2-deoxystreptamine antibiotic + acetyl-CoA = an N(3)-acetyl-2-deoxystreptamine antibiotic + CoA + H(+). Its function is as follows. Resistance to antibiotics containing the 2-deoxy-streptamine ring including gentamicin, kanamycin, tobramycin, neomycin and apramycin. This is Aminoglycoside N(3)-acetyltransferase III (aacC2) from Acinetobacter baumannii.